The chain runs to 477 residues: Glutamyl-tRNA(Gln) amidotransferase subunit A (477 aa).

Catalysis depends on charge relay system residues Lys-71 and Ser-146. Ser-170 functions as the Acyl-ester intermediate in the catalytic mechanism.

The protein belongs to the amidase family. GatA subfamily. As to quaternary structure, heterotrimer of A, B and C subunits.

The enzyme catalyses L-glutamyl-tRNA(Gln) + L-glutamine + ATP + H2O = L-glutaminyl-tRNA(Gln) + L-glutamate + ADP + phosphate + H(+). In terms of biological role, allows the formation of correctly charged Gln-tRNA(Gln) through the transamidation of misacylated Glu-tRNA(Gln) in organisms which lack glutaminyl-tRNA synthetase. The reaction takes place in the presence of glutamine and ATP through an activated gamma-phospho-Glu-tRNA(Gln). The sequence is that of Glutamyl-tRNA(Gln) amidotransferase subunit A from Halothermothrix orenii (strain H 168 / OCM 544 / DSM 9562).